A 166-amino-acid polypeptide reads, in one-letter code: Endoribonuclease YbeY (166 aa).

Positions 132, 136, and 142 each coordinate Zn(2+).

This sequence belongs to the endoribonuclease YbeY family. The cofactor is Zn(2+).

It localises to the cytoplasm. Single strand-specific metallo-endoribonuclease involved in late-stage 70S ribosome quality control and in maturation of the 3' terminus of the 16S rRNA. This chain is Endoribonuclease YbeY, found in Clostridium botulinum (strain Eklund 17B / Type B).